Here is a 467-residue protein sequence, read N- to C-terminus: MAAVDAILAGKYPAKAHARRVAESLQSHRNGCPGIVYLEAQKTRLIEDNDEPVPFRQRRPFFYLSGCPLSDSCLVYDLSEDQLTLFIPPVDPEDVIWSGLPMSTEQAQNQYDVDRVLVTTELNSTLASIASSHGGKAIAFTIADQVSESTQFHGFSEVNQSVLKGVIEQSRVVKDEYEVALLRKANDISAKAHIAAIKASQTAVNEREIEGAFIATCIANGAREQSYHPIVACGENGAILHYGKNDDTLIDPVTNQKKRNVLIDAGGEYRTYCADITRVIPVGGKFTAETRQIYDIVLQMQTECIAMLKEGVQWEDVHAHAHRVAIRGLLRLGILRGAEDEIFEKRVSVAFFPHGLGHYLGMDTHDTGGNPNYTDKDTMFRYLRVRGRLPAGSVITVEPGVYFCRFIIEPYIKSPESNKYIDTNVLDRYWRVGGVRIEDNVVVTKNGYDNLTTAPKAVDEIERLAVS.

Mn(2+) contacts are provided by Asp-264, Asp-275, Glu-398, and Glu-438.

Belongs to the peptidase M24B family. The cofactor is Mn(2+).

It catalyses the reaction Release of any N-terminal amino acid, including proline, that is linked to proline, even from a dipeptide or tripeptide.. Its function is as follows. Catalyzes the removal of a penultimate prolyl residue from the N-termini of peptides. This is Probable Xaa-Pro aminopeptidase pepP (pepP) from Neosartorya fischeri (strain ATCC 1020 / DSM 3700 / CBS 544.65 / FGSC A1164 / JCM 1740 / NRRL 181 / WB 181) (Aspergillus fischerianus).